We begin with the raw amino-acid sequence, 1048 residues long: 3-hydroxy-3-methylglutaryl-coenzyme A reductase (1048 aa).

Topologically, residues 1 to 32 are cytoplasmic; that stretch reads MDPVVRKPDPGGVQHRVTKALRAIVGHACRHP. Residues 33–53 form a helical membrane-spanning segment; the sequence is IHTLLVTALTAATTHLHVLEG. The Lumenal segment spans residues 54–220; sequence TYQATHRGLA…FLHRVHHAET (167 aa). A helical membrane pass occupies residues 221 to 241; that stretch reads VDLVIIGLSYLAMNMTVVSLF. The 182-residue stretch at 222-403 folds into the SSD domain; the sequence is DLVIIGLSYL…FTFYATILCV (182 aa). Residues 242–250 lie on the Cytoplasmic side of the membrane; the sequence is RVMRHLGSR. A helical membrane pass occupies residues 251–271; that stretch reads FWLAASVLLSGAFAFVLGLGI. Over 272–276 the chain is Lumenal; that stretch reads TTTCD. A helical membrane pass occupies residues 277 to 297; the sequence is VPVDMLLLFEGIPYLVLTVGF. The Cytoplasmic segment spans residues 298–348; the sequence is EKPIQLTRAVLCVSEELWGGGQRQVPNGASSDDSRQNQLIPNIIQLAVDRE. The helical transmembrane segment at 349–369 threads the bilayer; that stretch reads GWYIVRSYLLEIGALALGAVL. At 370–377 the chain is on the lumenal side; the sequence is RPKDSLGH. The helical transmembrane segment at 378-398 threads the bilayer; that stretch reads FCFLAAWTLLIDAVLLFTFYA. The Cytoplasmic segment spans residues 399–439; it reads TILCVKLEITRIRSPGGLGQVNAKHPSGIFGHKVKSTNITW. A helical membrane pass occupies residues 440–460; sequence WKLLTVGGFVLCHFLQLSPFF. Topologically, residues 461-542 are lumenal; that stretch reads YRVMGEYMAN…LDGLESPLGR (82 aa). N-linked (GlcNAc...) asparagine glycosylation is found at Asn-470 and Asn-520. The chain crosses the membrane as a helical span at residues 543 to 563; that stretch reads LCLMGALVVSLVLNNHLIHAA. Topologically, residues 564–1048 are cytoplasmic; the sequence is RWHAWPQARE…NRSAGATVKK (485 aa). Residue Glu-729 is the Charge relay system of the active site. 735-741 lines the CoA pocket; it reads SASRGCK. NADP(+) contacts are provided by residues 796-798 and 823-831; these read SRF and DAMGMNMIS. Catalysis depends on Lys-863, which acts as the Charge relay system. 892–894 is a CoA binding site; sequence VLK. The active-site Charge relay system is the Asp-939. A CoA-binding site is contributed by 1034–1035; it reads AH. The Proton donor role is filled by His-1035. 1039–1040 contacts NADP(+); the sequence is NR.

This sequence belongs to the HMG-CoA reductase family.

The protein resides in the endoplasmic reticulum membrane. The enzyme catalyses (R)-mevalonate + 2 NADP(+) + CoA = (3S)-3-hydroxy-3-methylglutaryl-CoA + 2 NADPH + 2 H(+). It participates in metabolic intermediate biosynthesis; (R)-mevalonate biosynthesis; (R)-mevalonate from acetyl-CoA: step 3/3. Functionally, HMG-CoA reductase; part of the first module of ergosterol biosynthesis pathway that includes the early steps of the pathway, conserved across all eukaryotes, and which results in the formation of mevalonate from acetyl-coenzyme A (acetyl-CoA). In this module, the cytosolic acetyl-CoA acetyltransferase catalyzes the formation of acetoacetyl-CoA. The hydroxymethylglutaryl-CoA synthase then condenses acetyl-CoA with acetoacetyl-CoA to form HMG-CoA. The rate-limiting step of the early module is the reduction to mevalonate by the 3-hydroxy-3-methylglutaryl-coenzyme A (HMG-CoA) reductase. This Aspergillus terreus protein is 3-hydroxy-3-methylglutaryl-coenzyme A reductase.